Here is a 186-residue protein sequence, read N- to C-terminus: GTP cyclohydrolase 1 2 (186 aa).

This sequence belongs to the GTP cyclohydrolase I family. Homomer.

It carries out the reaction GTP + H2O = 7,8-dihydroneopterin 3'-triphosphate + formate + H(+). It participates in cofactor biosynthesis; 7,8-dihydroneopterin triphosphate biosynthesis; 7,8-dihydroneopterin triphosphate from GTP: step 1/1. This chain is GTP cyclohydrolase 1 2, found in Pseudomonas putida (strain ATCC 47054 / DSM 6125 / CFBP 8728 / NCIMB 11950 / KT2440).